Consider the following 862-residue polypeptide: ATP-dependent helicase Lhr-Core (862 aa).

ATP-binding residues include Q37, K60, T61, D178, E179, V360, R377, and H380. The region spanning I41–E233 is the Helicase ATP-binding domain. A DEAH box motif is present at residues D178 to H181. Residues A269–D424 form the Helicase C-terminal domain. The interval V425–P513 is WH domain. The domain 4 stretch occupies residues D514–R862.

The protein belongs to the Lhr helicase family. Lhr-Core subfamily. Monomer.

It carries out the reaction Couples ATP hydrolysis with the unwinding of duplex DNA by translocating in the 3'-5' direction.. The catalysed reaction is ATP + H2O = ADP + phosphate + H(+). In terms of biological role, DNA helicase that translocates in a 3'-5' direction on single-stranded (ss)DNA, probably involved in DNA repair. Most active on three- or four-stranded forked DNA; flayed structures and Holliday junction (HJ) substrates are unwound slightly less well. Also unwinds 3'-tailed duplexes; both RNA:DNA hybrids and double-stranded (ds)DNA with a 3'-single strand (ss)DNA loading strand are unwound. Substrates where the helicase loads on a 3'-ssRNA tail (DNA:RNA and RNA:RNA) were not tested. Blunt-ended dsDNA is not a substrate. Probably involved in replication-coupled DNA repair; remodeling of fork DNA after binding by Lhr generates ssDNA for ATP-dependent DNA translocation. The sequence is that of ATP-dependent helicase Lhr-Core from Methanothermobacter thermautotrophicus (strain ATCC 29096 / DSM 1053 / JCM 10044 / NBRC 100330 / Delta H) (Methanobacterium thermoautotrophicum).